Here is a 362-residue protein sequence, read N- to C-terminus: MGTRSTSVSDAVAVLDERSREIFRRIVEGYLESGEPLGSRNLSRLLPMSLSPASVRNVMSDLEELGLIYSPHISAGRLPTQIGLRFFVDAFMQVGDLSAEDRANIDRQVRAESGGNPVESMMNEASRMLSGISRGAGLVITSKSDPVLKHVEFIRLEPTKALAVLVGDHDQVENRIIELPAGVTSSQLTEAANFLNAHMSGQTLPELRKQLSQLKDDVRHELDALSRDLVERGIAVWAGSPDEGKPAQLIIRGRANLLEGLGGAEDLDRLRMLFDDLEKKDSLIEILSLAESGSGVRIFIGSENKLFSLSGSSLIVAPYRDDDDRIVGAVGVIGPTRLNYSRIVPMVDYTAQLVSRLSRNPL.

Belongs to the HrcA family.

Negative regulator of class I heat shock genes (grpE-dnaK-dnaJ and groELS operons). Prevents heat-shock induction of these operons. This is Heat-inducible transcription repressor HrcA from Rhizobium etli (strain CIAT 652).